A 2013-amino-acid chain; its full sequence is Cell adhesion molecule DSCAM (2013 aa).

Residues 1 to 17 form the signal peptide; it reads MWILALSLFQSFANVFS. Residues 19 to 1594 lie on the Extracellular side of the membrane; it reads EPHSSLYFVN…EGLTTNEGLK (1576 aa). Ig-like C2-type domains lie at 20-119, 125-216, 225-305, 313-401, 407-500, 504-592, 596-685, 690-783, and 787-883; these read PHSS…VHIK, PYTV…ARLF, PSIL…AKVI, PLKA…VQVV, PKII…ARIN, PASI…VHVT, PPFI…SQLI, PKFV…MYLT, and PAMI…LTVQ. 9 cysteine pairs are disulfide-bonded: cysteine 46/cysteine 102, cysteine 145/cysteine 197, cysteine 246/cysteine 293, cysteine 335/cysteine 385, cysteine 428/cysteine 484, cysteine 525/cysteine 575, cysteine 617/cysteine 669, cysteine 711/cysteine 766, and cysteine 809/cysteine 865. N-linked (GlcNAc...) asparagine glycosylation occurs at asparagine 78. Asparagine 470 carries N-linked (GlcNAc...) asparagine glycosylation. An N-linked (GlcNAc...) asparagine glycan is attached at asparagine 666. Fibronectin type-III domains lie at 885–982, 987–1086, 1091–1187, and 1191–1285; these read PPDP…ADEA, PPQE…TLED, PPEN…TKED, and PPAG…AKAP. 2 N-linked (GlcNAc...) asparagine glycosylation sites follow: asparagine 1160 and asparagine 1250. The Ig-like C2-type 10 domain maps to 1285–1377; the sequence is PARILTFSGT…DEIILNLQVQ (93 aa). Cysteine 1307 and cysteine 1359 are joined by a disulfide. 2 Fibronectin type-III domains span residues 1379–1473 and 1474–1575; these read PPDQ…TLGK and EPQF…TIPP. A helical membrane pass occupies residues 1595-1615; that stretch reads ILVTISCILVGVLLLFVLLLV. Residues 1616–2013 lie on the Cytoplasmic side of the membrane; that stretch reads VRRRRREQRL…NPYAKSYTLV (398 aa). The interval 1616-2013 is required for netrin-mediated axon repulsion of neuronal growth cones; it reads VRRRRREQRL…NPYAKSYTLV (398 aa). 2 disordered regions span residues 1718–1809 and 1920–2013; these read LVDV…SASS and RDLS…YTLV. The span at 1799–1809 shows a compositional bias: low complexity; it reads SSMVSTESASS. Polar residues predominate over residues 1949-1968; sequence EASSSTSSTREGQQSWQQGA.

In terms of assembly, homodimer; mediates homophilic interactions to promote cell adhesion. Interacts with DCC; the interaction is abolished in response to NTN1. Interacts (via extracellular domain) with NTN1. Interacts (via extracellular domain) with UNC5C (via Ig-like C2-type domain). Interacts with PTK2. Interacts with FYN. Post-translationally, phosphorylated at tyrosine residues. Phosphorylation is enhanced by NTN1.

It localises to the cell membrane. The protein localises to the cell projection. The protein resides in the axon. It is found in the dendrite. Its subcellular location is the growth cone. It localises to the synapse. Its function is as follows. Cell adhesion molecule that plays a role in neuronal self-avoidance. Promotes repulsion between specific neuronal processes of either the same cell or the same subtype of cells. Mediates within retinal amacrine and ganglion cell subtypes both isoneuronal self-avoidance for creating an orderly dendritic arborization and heteroneuronal self-avoidance to maintain the mosaic spacing between amacrine and ganglion cell bodies. Receptor for netrin required for axon guidance independently of and in collaboration with the receptor DCC. Might also collaborate with UNC5C in NTN1-mediated axon repulsion independently of DCC. In spinal cord development plays a role in guiding commissural axons projection and pathfinding across the ventral midline to reach the floor plate upon ligand binding. Mediates intracellular signaling by stimulating the activation of MAPK8 and MAP kinase p38. Adhesion molecule that promotes lamina-specific synaptic connections in the retina: expressed in specific subsets of interneurons and retinal ganglion cells (RGCs) and promotes synaptic connectivity via homophilic interactions. This Rattus norvegicus (Rat) protein is Cell adhesion molecule DSCAM (Dscam).